The primary structure comprises 821 residues: Tip elongation aberrant protein Tea4 (821 aa).

2 stretches are compositionally biased toward polar residues: residues Met1–Asp11 and Asp21–Ile31. Positions Met1 to Ser36 are disordered. Position 35 is a phosphotyrosine (Tyr35). Phosphoserine is present on Ser36. Position 40 is a phosphotyrosine (Tyr40). The interval Ile51–Ser79 is disordered. Polar residues predominate over residues Gly53–Ser67. An SH3 domain is found at Ile130–Glu191. Disordered stretches follow at residues Leu267–Thr292, Ser333–Ala352, Asp473–Asn500, Ser529–Leu570, and Asp664–Ser697. Positions Glu268 to Glu282 are enriched in low complexity. Residues Tyr283–Thr292 are compositionally biased toward basic and acidic residues. Polar residues-rich tracts occupy residues Ser333–Ser350 and Asp473–Ala484. An interaction with tea1 region spans residues Leu527 to Arg821. The segment covering Ser529–Pro541 has biased composition (low complexity). Residues Glu554 to Glu563 show a composition bias toward basic and acidic residues. The interaction with win1 stretch occupies residues Lys599–Arg821. Residues Ala665–Ile674 are compositionally biased toward low complexity. Basic and acidic residues predominate over residues Ser675–Glu687.

An essential component of the tea1 cell-end complex. Interacts with win1, tea1 and for3. Interacts with tip1 in the presence of tea1.

It localises to the cytoplasm. The protein resides in the cytoskeleton. Cell polarity factor essential for the bipolar localization and function of structures containing the cell-end marker tea1 during the normal cell cycle. Regulates cell polarity in complex with tea1 and together with the stress signaling MAPK cascade, contributes to cell polarity maintenance under stress conditions. Required for the localization of for3 at the cell tip specifically during initiation of bipolar growth. During the new end take off (NETO), formation of a protein complex that includes tea1, tea4 and for3 is necessary and sufficient for the establishment of cell polarity and localized actin assembly at new cell ends. This Schizosaccharomyces pombe (strain 972 / ATCC 24843) (Fission yeast) protein is Tip elongation aberrant protein Tea4.